A 365-amino-acid chain; its full sequence is tRNA-specific 2-thiouridylase MnmA (365 aa).

ATP-binding positions include 9 to 16 (GLSGGVDS) and methionine 35. The interaction with target base in tRNA stretch occupies residues 95–97 (NPD). The active-site Nucleophile is cysteine 100. A disulfide bridge connects residues cysteine 100 and cysteine 196. An ATP-binding site is contributed by glycine 124. The interaction with tRNA stretch occupies residues 146–148 (KDQ). Cysteine 196 (cysteine persulfide intermediate) is an active-site residue. Residues 315–316 (RY) form an interaction with tRNA region.

The protein belongs to the MnmA/TRMU family.

Its subcellular location is the cytoplasm. It carries out the reaction S-sulfanyl-L-cysteinyl-[protein] + uridine(34) in tRNA + AH2 + ATP = 2-thiouridine(34) in tRNA + L-cysteinyl-[protein] + A + AMP + diphosphate + H(+). In terms of biological role, catalyzes the 2-thiolation of uridine at the wobble position (U34) of tRNA, leading to the formation of s(2)U34. In Dechloromonas aromatica (strain RCB), this protein is tRNA-specific 2-thiouridylase MnmA.